Consider the following 372-residue polypeptide: Tyrosine--tRNA ligase 1 (372 aa).

Residues Tyr37, Tyr169, Gln173, Asp176, and Gln191 each coordinate L-tyrosine. The 'KMSKS' region motif lies at 246–250 (KMSKS). Position 249 (Lys249) interacts with ATP.

The protein belongs to the class-I aminoacyl-tRNA synthetase family. TyrS type 4 subfamily. Homodimer.

The protein localises to the cytoplasm. It catalyses the reaction tRNA(Tyr) + L-tyrosine + ATP = L-tyrosyl-tRNA(Tyr) + AMP + diphosphate + H(+). Functionally, catalyzes the attachment of tyrosine to tRNA(Tyr) in a two-step reaction: tyrosine is first activated by ATP to form Tyr-AMP and then transferred to the acceptor end of tRNA(Tyr). The polypeptide is Tyrosine--tRNA ligase 1 (Pyrobaculum aerophilum (strain ATCC 51768 / DSM 7523 / JCM 9630 / CIP 104966 / NBRC 100827 / IM2)).